Consider the following 258-residue polypeptide: Heat-labile enterotoxin A chain (258 aa).

The N-terminal stretch at 1-18 is a signal peptide; that stretch reads MKNITFIFFILLASPLYA. Position 25–39 (25–39) interacts with NAD(+); sequence RADSRPPDEIKRSGG. The active site involves Glu130. A disulfide bridge connects residues Cys205 and Cys217.

Belongs to the enterotoxin A family. As to quaternary structure, heterohexamer of one A chain and of five B chains.

Functionally, the biological activity of the toxin is produced by the A chain, which activates intracellular adenyl cyclase. This is Heat-labile enterotoxin A chain (eltA) from Escherichia coli.